Reading from the N-terminus, the 527-residue chain is Peptide chain release factor 3 (527 aa).

Residues 9 to 278 enclose the tr-type G domain; the sequence is NKRRTFAIIS…GLTQWAPKPQ (270 aa). GTP contacts are provided by residues 18–25, 86–90, and 140–143; these read SHPDAGKT, DTPGH, and NKLD.

The protein belongs to the TRAFAC class translation factor GTPase superfamily. Classic translation factor GTPase family. PrfC subfamily.

It localises to the cytoplasm. In terms of biological role, increases the formation of ribosomal termination complexes and stimulates activities of RF-1 and RF-2. It binds guanine nucleotides and has strong preference for UGA stop codons. It may interact directly with the ribosome. The stimulation of RF-1 and RF-2 is significantly reduced by GTP and GDP, but not by GMP. The chain is Peptide chain release factor 3 from Haemophilus influenzae (strain PittEE).